The chain runs to 173 residues: Large ribosomal subunit protein uL10 (173 aa).

It belongs to the universal ribosomal protein uL10 family. In terms of assembly, part of the ribosomal stalk of the 50S ribosomal subunit. The N-terminus interacts with L11 and the large rRNA to form the base of the stalk. The C-terminus forms an elongated spine to which L12 dimers bind in a sequential fashion forming a multimeric L10(L12)X complex.

In terms of biological role, forms part of the ribosomal stalk, playing a central role in the interaction of the ribosome with GTP-bound translation factors. The polypeptide is Large ribosomal subunit protein uL10 (Acidithiobacillus ferrooxidans (strain ATCC 23270 / DSM 14882 / CIP 104768 / NCIMB 8455) (Ferrobacillus ferrooxidans (strain ATCC 23270))).